Here is a 273-residue protein sequence, read N- to C-terminus: MHTRTVFFISDGTGITAETFGNAVLAQFEMKPRHVRLPFTDTVDKAHQAVRQINHTAELEGVRPIVFTTLANMEVLEVIETGCKGMLLDMFGTFVRPLEIELAVKSNHRIGRFSDVSKSKEYDARIAAIDFSLAHDDGQSNRDLEGADVILVGVSRSGKTPTSLYLAMQHGLKAANYPLIPEDFERKQLPPALMPHRKKIFGLTIQPERLSQIRNERRPDSRYASLENCRNEVSEAEAMMRRAGIRWLSTTTKSIEEIATTILQELKPERLVY.

ADP is bound at residue 153-160 (GVSRSGKT).

Belongs to the pyruvate, phosphate/water dikinase regulatory protein family. PSRP subfamily.

It catalyses the reaction [pyruvate, water dikinase] + ADP = [pyruvate, water dikinase]-phosphate + AMP + H(+). The catalysed reaction is [pyruvate, water dikinase]-phosphate + phosphate + H(+) = [pyruvate, water dikinase] + diphosphate. Functionally, bifunctional serine/threonine kinase and phosphorylase involved in the regulation of the phosphoenolpyruvate synthase (PEPS) by catalyzing its phosphorylation/dephosphorylation. This is Putative phosphoenolpyruvate synthase regulatory protein from Variovorax paradoxus (strain S110).